The chain runs to 266 residues: Undecaprenyl-diphosphatase (266 aa).

7 helical membrane passes run 39 to 59 (PGAS…AYYF), 86 to 106 (SIFI…IFIP), 112 to 132 (VLRS…FMYL), 147 to 167 (NFSN…PGVS), 189 to 209 (FSFL…FVSS), 216 to 236 (LGFF…LLAI), and 246 to 266 (NGLK…LLNL).

The protein belongs to the UppP family.

The protein localises to the cell inner membrane. It carries out the reaction di-trans,octa-cis-undecaprenyl diphosphate + H2O = di-trans,octa-cis-undecaprenyl phosphate + phosphate + H(+). Catalyzes the dephosphorylation of undecaprenyl diphosphate (UPP). Confers resistance to bacitracin. This chain is Undecaprenyl-diphosphatase, found in Prochlorococcus marinus (strain MIT 9301).